The primary structure comprises 266 residues: Undecaprenyl-diphosphatase 3 (266 aa).

The next 8 helical transmembrane spans lie at 4–24 (IEAF…FLPI), 43–63 (SGRA…CWLY), 86–106 (FSVL…VDFI), 109–129 (VLFS…IIFW), 145–165 (ITFK…IPGT), 186–206 (TEFS…YDLL), 219–239 (NIGL…KALV), and 246–266 (TLRV…FVML).

This sequence belongs to the UppP family.

It is found in the cell inner membrane. It carries out the reaction di-trans,octa-cis-undecaprenyl diphosphate + H2O = di-trans,octa-cis-undecaprenyl phosphate + phosphate + H(+). Functionally, catalyzes the dephosphorylation of undecaprenyl diphosphate (UPP). Confers resistance to bacitracin. This chain is Undecaprenyl-diphosphatase 3, found in Acinetobacter baylyi (strain ATCC 33305 / BD413 / ADP1).